The following is a 224-amino-acid chain: UPF0758 protein PLES_57141 (224 aa).

The MPN domain occupies I102–L224. Zn(2+)-binding residues include H173, H175, and D186. The JAMM motif signature appears at H173–D186.

It belongs to the UPF0758 family.

This chain is UPF0758 protein PLES_57141, found in Pseudomonas aeruginosa (strain LESB58).